Reading from the N-terminus, the 236-residue chain is uncharacterized protein (236 aa).

Positions 1-17 (MSVSSLLQPNTYNINSK) are enriched in polar residues. The interval 1-94 (MSVSSLLQPN…GVKGTTGGTI (94 aa)) is disordered. The segment covering 18–35 (SQSLSNTPSNPTSQTNTL) has biased composition (low complexity). Residues 58–91 (GPSGPKGDKGDPGSKGETGSQGIKGDPGVKGTTG) enclose the Collagen-like domain.

This sequence belongs to the sputnik virus V6 family.

This is an uncharacterized protein from Sputnik virophage.